We begin with the raw amino-acid sequence, 355 residues long: Methionine import ATP-binding protein MetN (355 aa).

Residues 8–250 (LKNIDITFTQ…PQEDLTQEFI (243 aa)) enclose the ABC transporter domain. 42–49 (GYSGAGKS) lines the ATP pocket.

The protein belongs to the ABC transporter superfamily. Methionine importer (TC 3.A.1.24) family. As to quaternary structure, the complex is composed of two ATP-binding proteins (MetN), two transmembrane proteins (MetI) and a solute-binding protein (MetQ).

The protein localises to the cell membrane. The catalysed reaction is L-methionine(out) + ATP + H2O = L-methionine(in) + ADP + phosphate + H(+). The enzyme catalyses D-methionine(out) + ATP + H2O = D-methionine(in) + ADP + phosphate + H(+). Functionally, part of the ABC transporter complex MetNIQ involved in methionine import. Responsible for energy coupling to the transport system. The protein is Methionine import ATP-binding protein MetN of Streptococcus thermophilus (strain CNRZ 1066).